Consider the following 63-residue polypeptide: Putative flagellar calcium-binding protein (63 aa).

A compositionally biased stretch (polar residues) spans 1 to 11 (MGCISSKSTQT). Residues 1–23 (MGCISSKSTQTGKKEGKTAAERK) are disordered. Basic and acidic residues predominate over residues 12–23 (GKKEGKTAAERK). The region spanning 40-63 (EDKARRIELFKKFDKNNTGKLSME) is the EF-hand domain. Residues D53, N55, T57, and K59 each coordinate Ca(2+).

This sequence belongs to the calflagin family.

It localises to the cell projection. The protein resides in the cilium. The protein localises to the flagellum. The protein is Putative flagellar calcium-binding protein (CABP) of Crithidia fasciculata.